An 82-amino-acid polypeptide reads, in one-letter code: Small ribosomal subunit protein bS18 (82 aa).

The tract at residues 1-20 (MVDINQIPTRRPFHRRRKTC) is disordered.

This sequence belongs to the bacterial ribosomal protein bS18 family. Part of the 30S ribosomal subunit. Forms a tight heterodimer with protein bS6.

Functionally, binds as a heterodimer with protein bS6 to the central domain of the 16S rRNA, where it helps stabilize the platform of the 30S subunit. This chain is Small ribosomal subunit protein bS18, found in Mesorhizobium japonicum (strain LMG 29417 / CECT 9101 / MAFF 303099) (Mesorhizobium loti (strain MAFF 303099)).